A 679-amino-acid polypeptide reads, in one-letter code: Protein hook (679 aa).

One can recognise a Calponin-homology (CH) domain in the interval 6 to 123 (NEMYYSLLEW…RLLQLVLGCA (118 aa)). Coiled-coil stretches lie at residues 135–437 (EIMC…LKCG) and 480–574 (QTAL…QEIL).

This sequence belongs to the hook family. As to quaternary structure, homodimer. Interacts with microtubules via its N-terminus.

The protein resides in the cytoplasm. It localises to the cytoskeleton. The protein localises to the endosome. It is found in the synapse. Involved in endocytic trafficking by stabilizing organelles of the endocytic pathway. Probably acts as a cytoskeletal linker protein required to tether endosome vesicles to the cytoskeleton. Involved in modulation of endocytosis at stages required for down-regulation of membrane proteins that control synapse size. Not involved in synaptic vesicle recycling. Required in R7 cells for boss endocytosis into multivesicular bodies (MVBs). Has a role in regulating adult longevity. In Drosophila sechellia (Fruit fly), this protein is Protein hook.